Reading from the N-terminus, the 336-residue chain is UDP-N-acetylenolpyruvoylglucosamine reductase (336 aa).

Residues 1 to 178 (MAHSLQTLHT…TTVHLALPKE (178 aa)) form the FAD-binding PCMH-type domain. The active site involves arginine 154. The Proton donor role is filled by serine 222. Glutamate 318 is an active-site residue.

Belongs to the MurB family. FAD is required as a cofactor.

It is found in the cytoplasm. It carries out the reaction UDP-N-acetyl-alpha-D-muramate + NADP(+) = UDP-N-acetyl-3-O-(1-carboxyvinyl)-alpha-D-glucosamine + NADPH + H(+). Its pathway is cell wall biogenesis; peptidoglycan biosynthesis. Functionally, cell wall formation. The sequence is that of UDP-N-acetylenolpyruvoylglucosamine reductase from Pseudoalteromonas translucida (strain TAC 125).